A 1647-amino-acid polypeptide reads, in one-letter code: Cortactin-binding protein 2 (1647 aa).

Disordered stretches follow at residues 1–27 (MATD…AEAA), 202–222 (EKKK…RSTE), 318–427 (HVKK…QPGL), 440–468 (GNAN…RDNL), and 482–604 (LSRF…PSID). The stretch at 120-276 (KMQERMATQL…EQLKRGSDSK (157 aa)) forms a coiled coil. Residues 362 to 372 (SSAPSLPPASA) are compositionally biased toward low complexity. The span at 379-388 (GPSTGSTADL) shows a compositional bias: polar residues. Over residues 389 to 411 (PSSTAPAPGSAAQSPVAAALGPA) the composition is skewed to low complexity. The span at 440-466 (GNANDPDQNGNTTQSPPSRDVSPTSRD) shows a compositional bias: polar residues. Position 484 is an asymmetric dimethylarginine (R484). The segment covering 488–509 (PAVGAAPRPGAPPTGDAGAYPP) has biased composition (low complexity). Over residues 569 to 579 (TVASPPSSLPQ) the composition is skewed to polar residues. 5 ANK repeats span residues 695-725 (GRPT…DINY), 729-758 (DGHS…QVNA), 762-791 (NGFT…NINH), 795-824 (GGQT…DRSV), and 828-857 (DGWT…PAHG). The segment at 856–886 (HGNSLNEEEPESDVSDLDDGEESSEGESKPV) is disordered. Residues 861–880 (NEEEPESDVSDLDDGEESSE) are compositionally biased toward acidic residues. An ANK 6 repeat occupies 898–928 (EGWTAAHIAASKGFKNCLEILCRHRGLEPER). The segment at 1436–1467 (ENGAWRKVNTSPRRKSGRFSSPTWNKPDLSNE) is disordered. At S1509 the chain carries Phosphoserine. A disordered region spans residues 1542-1647 (RTFDSSGNNP…HKNEQTHRKT (106 aa)). 2 stretches are compositionally biased toward polar residues: residues 1544–1559 (FDSS…TVNN) and 1567–1584 (KEVS…SNNK). Residues 1609–1623 (SQNTKRSSSSSNTRQ) show a composition bias toward low complexity. Over residues 1630–1647 (SKEENWNLHKNEQTHRKT) the composition is skewed to basic and acidic residues.

In terms of assembly, interacts with CTTN/cortactin SH3 domain. Interacts with STRN, STRN4/zinedin and MOB4/phocein; this interactions mediate the association with the STRIPAK core complex and may regulate dendritic spine distribution of the STRIPAK complex in hippocampal neurons. Activation of glutamate receptors weakens the interaction with STRN and STRN4.

Its subcellular location is the cytoplasm. It is found in the cell cortex. The protein localises to the cell projection. It localises to the dendritic spine. Its function is as follows. Regulates the dendritic spine distribution of CTTN/cortactin in hippocampal neurons, and thus controls dendritic spinogenesis and dendritic spine maintenance. Associates with the striatin-interacting phosphatase and kinase (STRIPAK) core complex to regulate dendritic spine distribution of the STRIPAK complex in hippocampal neurons. The chain is Cortactin-binding protein 2 (CTTNBP2) from Microcebus murinus (Gray mouse lemur).